The following is a 211-amino-acid chain: Urease accessory protein UreF (211 aa).

The tract at residues 71-93 (DDADRETDARTPAPAARHASRSQ) is disordered.

Belongs to the UreF family. UreD, UreF and UreG form a complex that acts as a GTP-hydrolysis-dependent molecular chaperone, activating the urease apoprotein by helping to assemble the nickel containing metallocenter of UreC. The UreE protein probably delivers the nickel.

It is found in the cytoplasm. Its function is as follows. Required for maturation of urease via the functional incorporation of the urease nickel metallocenter. In Mycobacterium bovis (strain ATCC BAA-935 / AF2122/97), this protein is Urease accessory protein UreF.